Here is a 309-residue protein sequence, read N- to C-terminus: Glutaminase (309 aa).

Serine 64, asparagine 114, glutamate 160, asparagine 167, tyrosine 191, tyrosine 243, and valine 261 together coordinate substrate.

This sequence belongs to the glutaminase family. As to quaternary structure, homotetramer.

It carries out the reaction L-glutamine + H2O = L-glutamate + NH4(+). The polypeptide is Glutaminase (Methylorubrum populi (strain ATCC BAA-705 / NCIMB 13946 / BJ001) (Methylobacterium populi)).